Reading from the N-terminus, the 146-residue chain is U1 small nuclear ribonucleoprotein C (146 aa).

A Matrin-type zinc finger spans residues 4 to 36 (YYCDYCDTYLTHDSPSVRKTHCTGRKHRDNVKF). Residues 64-96 (NNPFAGGPSSAPPKPSGVSIPPPNMGAPPRPGM) are disordered. A compositionally biased stretch (pro residues) spans 73–96 (SAPPKPSGVSIPPPNMGAPPRPGM).

It belongs to the U1 small nuclear ribonucleoprotein C family. In terms of assembly, U1 snRNP is composed of the 7 core Sm proteins B/B', D1, D2, D3, E, F and G that assemble in a heptameric protein ring on the Sm site of the small nuclear RNA to form the core snRNP, and at least 3 U1 snRNP-specific proteins U1-70K, U1-A and U1-C. U1-C interacts with U1 snRNA and the 5' splice-site region of the pre-mRNA.

It localises to the nucleus. Component of the spliceosomal U1 snRNP, which is essential for recognition of the pre-mRNA 5' splice-site and the subsequent assembly of the spliceosome. U1-C is directly involved in initial 5' splice-site recognition for both constitutive and regulated alternative splicing. The interaction with the 5' splice-site seems to precede base-pairing between the pre-mRNA and the U1 snRNA. Stimulates commitment or early (E) complex formation by stabilizing the base pairing of the 5' end of the U1 snRNA and the 5' splice-site region. The chain is U1 small nuclear ribonucleoprotein C from Drosophila pseudoobscura pseudoobscura (Fruit fly).